We begin with the raw amino-acid sequence, 242 residues long: DNA repair protein RecO (242 aa).

The protein belongs to the RecO family.

Functionally, involved in DNA repair and RecF pathway recombination. This Vibrio atlanticus (strain LGP32) (Vibrio splendidus (strain Mel32)) protein is DNA repair protein RecO.